Consider the following 95-residue polypeptide: Osteocalcin-related protein (95 aa).

Residues 1–23 (MRTLSLLTLLALAALCLSDLTDA) form the signal peptide. The propeptide occupies 24-49 (TPTGPESDKAFMSKQEGNKVVNRLRR). Positions 46 to 92 (RLRRYLGASVPSPDPLEPTRELCELDPACDELSNQYGLKTAYRRIYG) constitute a Gla domain. Ca(2+) is bound by residues E62, E66, E69, and D75. 4-carboxyglutamate is present on residues E66 and E69. Residues C68 and C74 are joined by a disulfide bond.

The protein belongs to the osteocalcin/matrix Gla protein family. Gamma-carboxyglutamic acid residues are formed by vitamin K dependent carboxylation. These residues are essential for the binding of calcium. Expressed in kidney and lung, but not in bone.

The protein localises to the secreted. Functionally, binds strongly to apatite and calcium. The sequence is that of Osteocalcin-related protein from Mus musculus (Mouse).